The sequence spans 122 residues: Large ribosomal subunit protein uL14c (122 aa).

The protein belongs to the universal ribosomal protein uL14 family. As to quaternary structure, part of the 50S ribosomal subunit.

It localises to the plastid. The protein resides in the chloroplast. In terms of biological role, binds to 23S rRNA. This chain is Large ribosomal subunit protein uL14c, found in Buxus microphylla (Littleleaf boxwood).